The primary structure comprises 515 residues: Interferon-induced, double-stranded RNA-activated protein kinase (515 aa).

Alanine 2 is subject to N-acetylalanine. A DRBM 1 domain is found at 8–76 (FYMDKLNKYR…AKLAVDILDN (69 aa)). A Glycyl lysine isopeptide (Lys-Gly) (interchain with G-Cter in ISG15) cross-link involves residue lysine 68. Position 84 is a phosphothreonine (threonine 84). The DRBM 2 domain occupies 95–162 (NYIGLVNSFA…AKEAYQKLLK (68 aa)). Tyrosine 96 bears the Phosphotyrosine; by autocatalysis mark. A Glycyl lysine isopeptide (Lys-Gly) (interchain with G-Cter in ISG15) cross-link involves residue lysine 154. A Phosphotyrosine; by autocatalysis modification is found at tyrosine 157. Residues 204–224 (ENVFTNGLGENKRKSGVKVSP) form a disordered region. At threonine 233 the chain carries Phosphothreonine. Positions 241 to 515 (DFEDIEEIGL…ISEKKKRNTC (275 aa)) are interaction with TRAF5. In terms of domain architecture, Protein kinase spans 242–504 (FEDIEEIGLG…EILKTLAEWR (263 aa)). 248-256 (IGLGGFGQV) is an ATP binding site. Tyrosine 268 is subject to Phosphotyrosine; by autocatalysis. Lysine 271 serves as a coordination point for ATP. Aspartate 376 acts as the Proton acceptor in catalysis. Phosphothreonine; by autocatalysis is present on residues threonine 409 and threonine 414. A Phosphoserine modification is found at serine 419.

It belongs to the protein kinase superfamily. Ser/Thr protein kinase family. GCN2 subfamily. In terms of assembly, homodimer. Interacts with DNAJC3 and STRBP. Forms a complex with FANCA, FANCC, FANCG and HSP70. Interacts with ADAR/ADAR1. The inactive form interacts with NCK1. Interacts (via the kinase catalytic domain) with STAT3 (via SH2 domain), TRAF2 (C-terminus), TRAF5 (C-terminus) and TRAF6 (C-terminus). Interacts with MAP2K6, TARBP2, NLRP1, NLRC4 and AIM2. Interacts (via DRBM 1 domain) with DUS2L (via DRBM domain). Interacts with DHX9 (via N-terminus) and this interaction is dependent upon activation of the kinase. The inactive form interacts with GSN. Interacts with IKBKB/IKKB, NPM1, NLRP3 and IRS1. Post-translationally, autophosphorylated on several Ser, Thr and Tyr residues. Autophosphorylation of Thr-414 is dependent on Thr-409 and is stimulated by dsRNA binding and dimerization. Autophosphorylation apparently leads to the activation of the kinase. Tyrosine autophosphorylation is essential for efficient dsRNA-binding, dimerization, and kinase activation. Expressed in heart, lung, brain, kidney, testes, thymus and bone marrow.

It is found in the cytoplasm. The protein resides in the nucleus. Its subcellular location is the perinuclear region. It catalyses the reaction L-seryl-[protein] + ATP = O-phospho-L-seryl-[protein] + ADP + H(+). The enzyme catalyses L-threonyl-[protein] + ATP = O-phospho-L-threonyl-[protein] + ADP + H(+). It carries out the reaction L-tyrosyl-[protein] + ATP = O-phospho-L-tyrosyl-[protein] + ADP + H(+). Its activity is regulated as follows. Initially produced in an inactive form and is activated by binding to viral dsRNA, which causes dimerization and autophosphorylation in the activation loop and stimulation of function. ISGylation can activate it in the absence of viral infection. Can also be activated by heparin, pro-inflammatory stimuli, growth factors, cytokines, oxidative stress and the cellular protein PRKRA. Activity is markedly stimulated by manganese ions. Activation is blocked by the cellular proteins TARBP2, DUS2L, NPM1, NCK1 and ADAR. Functionally, IFN-induced dsRNA-dependent serine/threonine-protein kinase that phosphorylates the alpha subunit of eukaryotic translation initiation factor 2 (EIF2S1/eIF-2-alpha) and plays a key role in the innate immune response to viral infection. Inhibits viral replication via the integrated stress response (ISR): EIF2S1/eIF-2-alpha phosphorylation in response to viral infection converts EIF2S1/eIF-2-alpha in a global protein synthesis inhibitor, resulting to a shutdown of cellular and viral protein synthesis, while concomitantly initiating the preferential translation of ISR-specific mRNAs, such as the transcriptional activator ATF4. Exerts its antiviral activity on a wide range of DNA and RNA viruses including west nile virus (WNV), sindbis virus (SV), foot-and-mouth virus (FMDV), semliki Forest virus (SFV) and lymphocytic choriomeningitis virus (LCMV). Also involved in the regulation of signal transduction, apoptosis, cell proliferation and differentiation: phosphorylates other substrates including p53/TP53, PPP2R5A, DHX9, ILF3, and IRS1. In addition to serine/threonine-protein kinase activity, also has tyrosine-protein kinase activity and phosphorylates CDK1 at 'Tyr-4' upon DNA damage, facilitating its ubiquitination and proteasomal degradation. Either as an adapter protein and/or via its kinase activity, can regulate various signaling pathways (p38 MAP kinase, NF-kappa-B and insulin signaling pathways) and transcription factors (JUN, STAT1, STAT3, IRF1, ATF3) involved in the expression of genes encoding pro-inflammatory cytokines and IFNs. Activates the NF-kappa-B pathway via interaction with IKBKB and TRAF family of proteins and activates the p38 MAP kinase pathway via interaction with MAP2K6. Can act as both a positive and negative regulator of the insulin signaling pathway (ISP). Negatively regulates ISP by inducing the inhibitory phosphorylation of insulin receptor substrate 1 (IRS1) at 'Ser-312' and positively regulates ISP via phosphorylation of PPP2R5A which activates FOXO1, which in turn up-regulates the expression of insulin receptor substrate 2 (IRS2). Can regulate NLRP3 inflammasome assembly and the activation of NLRP3, NLRP1, AIM2 and NLRC4 inflammasomes. Plays a role in the regulation of the cytoskeleton by binding to gelsolin (GSN), sequestering the protein in an inactive conformation away from actin. This is Interferon-induced, double-stranded RNA-activated protein kinase (Eif2ak2) from Mus musculus (Mouse).